The primary structure comprises 296 residues: Urease accessory protein UreD (296 aa).

Belongs to the UreD family. In terms of assembly, ureD, UreF and UreG form a complex that acts as a GTP-hydrolysis-dependent molecular chaperone, activating the urease apoprotein by helping to assemble the nickel containing metallocenter of UreC. The UreE protein probably delivers the nickel.

Its subcellular location is the cytoplasm. In terms of biological role, required for maturation of urease via the functional incorporation of the urease nickel metallocenter. The polypeptide is Urease accessory protein UreD (Janthinobacterium sp. (strain Marseille) (Minibacterium massiliensis)).